We begin with the raw amino-acid sequence, 176 residues long: Large ribosomal subunit protein bL17 (176 aa).

The segment at 124 to 176 is disordered; the sequence is AAPKAARQDRSKRVKGSRKTEASAAKAAPAAQAAPELPAESDAPAAEAAPTEE. Positions 145–176 are enriched in low complexity; that stretch reads ASAAKAAPAAQAAPELPAESDAPAAEAAPTEE.

Belongs to the bacterial ribosomal protein bL17 family. As to quaternary structure, part of the 50S ribosomal subunit. Contacts protein L32.

In Chlorobium phaeovibrioides (strain DSM 265 / 1930) (Prosthecochloris vibrioformis (strain DSM 265)), this protein is Large ribosomal subunit protein bL17.